Consider the following 379-residue polypeptide: Queuine tRNA-ribosyltransferase (379 aa).

The active-site Proton acceptor is the Asp94. Residues 94–98 (DSGGF), Asp148, Gln191, and Gly218 each bind substrate. The tract at residues 249–255 (GVGSPDS) is RNA binding. Asp268 (nucleophile) is an active-site residue. Positions 273–277 (TRIAR) are RNA binding; important for wobble base 34 recognition. 4 residues coordinate Zn(2+): Cys306, Cys308, Cys311, and His337.

This sequence belongs to the queuine tRNA-ribosyltransferase family. Homodimer. Within each dimer, one monomer is responsible for RNA recognition and catalysis, while the other monomer binds to the replacement base PreQ1. It depends on Zn(2+) as a cofactor.

It carries out the reaction 7-aminomethyl-7-carbaguanine + guanosine(34) in tRNA = 7-aminomethyl-7-carbaguanosine(34) in tRNA + guanine. The protein operates within tRNA modification; tRNA-queuosine biosynthesis. Functionally, catalyzes the base-exchange of a guanine (G) residue with the queuine precursor 7-aminomethyl-7-deazaguanine (PreQ1) at position 34 (anticodon wobble position) in tRNAs with GU(N) anticodons (tRNA-Asp, -Asn, -His and -Tyr). Catalysis occurs through a double-displacement mechanism. The nucleophile active site attacks the C1' of nucleotide 34 to detach the guanine base from the RNA, forming a covalent enzyme-RNA intermediate. The proton acceptor active site deprotonates the incoming PreQ1, allowing a nucleophilic attack on the C1' of the ribose to form the product. After dissociation, two additional enzymatic reactions on the tRNA convert PreQ1 to queuine (Q), resulting in the hypermodified nucleoside queuosine (7-(((4,5-cis-dihydroxy-2-cyclopenten-1-yl)amino)methyl)-7-deazaguanosine). The chain is Queuine tRNA-ribosyltransferase from Bacillus cereus (strain G9842).